Here is a 1479-residue protein sequence, read N- to C-terminus: C-type mannose receptor 2 (1479 aa).

The N-terminal stretch at 1–30 (MGPGRPAPAPWPRHLLRCVLLLGCLHLGRP) is a signal peptide. Over 31 to 1414 (GAPGDAALPE…PSALPENPAA (1384 aa)) the chain is Extracellular. The Ricin B-type lectin domain occupies 41–167 (PNVFLIFSHG…WRIYGSEEDL (127 aa)). The cysteines at positions 54 and 68 are disulfide-linked. A glycan (N-linked (GlcNAc...) (complex) asparagine) is linked at asparagine 69. A disulfide bond links cysteine 93 and cysteine 112. An N-linked (GlcNAc...) asparagine glycan is attached at asparagine 140. The Fibronectin type-II domain occupies 182–230 (SHGKPCTIPFKYDNQWFHGCTSTGREDGHLWCATTQDYGKDERWGFCPI). Disulfide bonds link cysteine 187–cysteine 213, cysteine 201–cysteine 228, cysteine 266–cysteine 359, and cysteine 335–cysteine 351. A C-type lectin 1 domain is found at 244–360 (LTDSCYQFNF…CSIALPYVCK (117 aa)). N-linked (GlcNAc...) asparagine glycosylation is present at asparagine 364. C-type lectin domains are found at residues 389–505 (FQGH…SICK), 528–644 (HSPS…RYIC), 678–809 (KLRY…WICK), and 832–951 (FQEA…YICK). 2 disulfide bridges follow: cysteine 410/cysteine 504 and cysteine 481/cysteine 496. Asparagine 588 is a glycosylation site (N-linked (GlcNAc...) asparagine). Intrachain disulfides connect cysteine 618-cysteine 635, cysteine 704-cysteine 808, cysteine 785-cysteine 800, cysteine 853-cysteine 950, and cysteine 927-cysteine 942. N-linked (GlcNAc...) asparagine glycosylation is found at asparagine 954 and asparagine 1029. C-type lectin domains follow at residues 979 to 1107 (FLNK…GFIC), 1132 to 1243 (YLNG…GAVC), and 1273 to 1393 (FREH…GVVC). A disulfide bridge links cysteine 1078 with cysteine 1098. Residue lysine 1142 forms a Glycyl lysine isopeptide (Lys-Gly) (interchain with G-Cter in SUMO1) linkage. A disulfide bridge links cysteine 1220 with cysteine 1234. Asparagine 1350 is a glycosylation site (N-linked (GlcNAc...) asparagine). A disulfide bond links cysteine 1369 and cysteine 1384. The helical transmembrane segment at 1415-1435 (LVVVLMAVLLLLALLTAALIL) threads the bilayer. Residues 1436 to 1479 (YRRRQSIERGAFEGARYSRSSSSPTEATEKNILVSDMEMNEQQE) lie on the Cytoplasmic side of the membrane. The interval 1450-1479 (ARYSRSSSSPTEATEKNILVSDMEMNEQQE) is disordered.

As to quaternary structure, interacts with C-terminal region of type I collagen/COL1A1. Interacts directly with PLAUR/UPAR and PLAU/pro-UPA to form a tri-molecular complex. Interacts with collagen V. In terms of processing, N-glycosylated. Ubiquitous with low expression in brain, placenta, lung, kidney, pancreas, spleen, thymus and colon. Expressed in endothelial cells, fibroblasts and macrophages. Highly expressed in fetal lung and kidney.

The protein resides in the membrane. Functionally, may play a role as endocytotic lectin receptor displaying calcium-dependent lectin activity. Internalizes glycosylated ligands from the extracellular space for release in an endosomal compartment via clathrin-mediated endocytosis. May be involved in plasminogen activation system controlling the extracellular level of PLAUR/PLAU, and thus may regulate protease activity at the cell surface. May contribute to cellular uptake, remodeling and degradation of extracellular collagen matrices. May play a role during cancer progression as well as in other chronic tissue destructive diseases acting on collagen turnover. May participate in remodeling of extracellular matrix cooperating with the matrix metalloproteinases (MMPs). The sequence is that of C-type mannose receptor 2 (MRC2) from Homo sapiens (Human).